The following is a 423-amino-acid chain: Glucose-1-phosphate adenylyltransferase (423 aa).

Alpha-D-glucose 1-phosphate is bound by residues Y107, G172, 187–188 (EK), and S205.

It belongs to the bacterial/plant glucose-1-phosphate adenylyltransferase family. Homotetramer.

The enzyme catalyses alpha-D-glucose 1-phosphate + ATP + H(+) = ADP-alpha-D-glucose + diphosphate. It functions in the pathway glycan biosynthesis; glycogen biosynthesis. Functionally, involved in the biosynthesis of ADP-glucose, a building block required for the elongation reactions to produce glycogen. Catalyzes the reaction between ATP and alpha-D-glucose 1-phosphate (G1P) to produce pyrophosphate and ADP-Glc. In Cereibacter sphaeroides (strain ATCC 17025 / ATH 2.4.3) (Rhodobacter sphaeroides), this protein is Glucose-1-phosphate adenylyltransferase.